Reading from the N-terminus, the 397-residue chain is Heterogeneous nuclear ribonucleoprotein K homolog (397 aa).

A disordered region spans residues 1-41 (MMIKVGAAINGTDSPKAMKREHDNDDGDRTGRHKRPKTDGF). Positions 16–30 (KAMKREHDNDDGDRT) are enriched in basic and acidic residues. 2 KH domains span residues 49-111 (KFEV…LKDV) and 124-189 (PCEV…IEEV). The segment at 220–279 (GGFPGNMPAGGPPNNRGPAPQRGGQGPPGGPRSYGGAITQGGGQRSFEAGDFQQFRGGPG) is disordered. The segment covering 224–241 (GNMPAGGPPNNRGPAPQR) has biased composition (low complexity). One can recognise a KH 3 domain in the interval 316–379 (VTTAQVTIPS…QQIHSAQYLL (64 aa)).

As to quaternary structure, interacts with alg-1; the interaction is direct and may be strengthened through RNA-protein association. As to expression, expressed in gut, muscle, neuronal and hypodermal tissues. Highly expressed in the germline and oocytes.

It localises to the nucleus. Its subcellular location is the cytoplasm. Its function is as follows. RNA-binding protein which functions together with alg-1, a component of the miRNA loading complex, to modulate the processing and activity of specific miRNAs such as miR-58 and let-7 to regulate gene expression at the post-transcriptional level during embryonic, hypodermal and neuronal development. Promotes the lsy-6-mediated repression of cog-1 in uterine cells. In embryos, may play a role in the DNA damage response. This chain is Heterogeneous nuclear ribonucleoprotein K homolog, found in Caenorhabditis elegans.